Consider the following 525-residue polypeptide: Chromosomal replication initiator protein DnaA (525 aa).

Residues 1-71 (MNDFWQHCSA…SDLARDFWNA (71 aa)) form a domain I, interacts with DnaA modulators region. A domain II region spans residues 71–188 (APIEVQFVLD…GEADSMYERS (118 aa)). The segment at 160–182 (AAAGRRTWRPGPGAAPANGGEAD) is disordered. Residues 169–181 (PGPGAAPANGGEA) show a composition bias toward low complexity. Positions 189–405 (KLNPVLTFDN…GALRKILAYS (217 aa)) are domain III, AAA+ region. Residues G233, G235, K236, and T237 each coordinate ATP. The segment at 406-525 (KFHGREISIE…LHVLEQTLKG (120 aa)) is domain IV, binds dsDNA.

The protein belongs to the DnaA family. Oligomerizes as a right-handed, spiral filament on DNA at oriC.

Its subcellular location is the cytoplasm. Its function is as follows. Plays an essential role in the initiation and regulation of chromosomal replication. ATP-DnaA binds to the origin of replication (oriC) to initiate formation of the DNA replication initiation complex once per cell cycle. Binds the DnaA box (a 9 base pair repeat at the origin) and separates the double-stranded (ds)DNA. Forms a right-handed helical filament on oriC DNA; dsDNA binds to the exterior of the filament while single-stranded (ss)DNA is stabiized in the filament's interior. The ATP-DnaA-oriC complex binds and stabilizes one strand of the AT-rich DNA unwinding element (DUE), permitting loading of DNA polymerase. After initiation quickly degrades to an ADP-DnaA complex that is not apt for DNA replication. Binds acidic phospholipids. This is Chromosomal replication initiator protein DnaA from Burkholderia ambifaria (strain ATCC BAA-244 / DSM 16087 / CCUG 44356 / LMG 19182 / AMMD) (Burkholderia cepacia (strain AMMD)).